Reading from the N-terminus, the 452-residue chain is Scaffold protein ILK (452 aa).

Position 1 is an N-acetylmethionine (methionine 1). ANK repeat units follow at residues 2-30, 31-63, 64-96, 97-129, and 130-174; these read DDIF…LNQG, DDHG…INVM, NRGD…INAV, NEHG…VSIC, and NKYG…GTTR. An interaction with LIMS1 region spans residues 33-139; that stretch reads HGFSPLHWAC…NKYGEMPVDK (107 aa). Residue threonine 173 is modified to Phosphothreonine. The interval 180 to 212 is PH-like; mediates interaction with TGFB1I1; it reads GTLNKHSGIDFKQLNFLAKLNENHSGELWKGRW. Serine 186 is subject to Phosphoserine. A Protein kinase domain is found at 193 to 446; the sequence is LNFLAKLNEN…PKFDMIVPIL (254 aa). ATP is bound by residues asparagine 200, asparagine 202, histidine 203, and serine 204. Serine 246 is modified (phosphoserine). Residues histidine 270, methionine 272, and asparagine 279 each coordinate ATP. Aspartate 339 serves as a coordination point for Mg(2+). Lysine 341 contributes to the ATP binding site. The short motif at 363 to 371 is the Nuclear localization signal element; that stretch reads KKPEDTNRR. Lysine 426 carries the N6-acetyllysine modification.

Belongs to the protein kinase superfamily. TKL Ser/Thr protein kinase family. Component of the heterotrimeric IPP (ILK-PINCH-PARVIN) complex composed of ILK, LIMS1/PINCH and PARVA; the complex binds to F-actin via the C-terminal tail of LIMS1 and the N-terminal region of PARVA, promoting F-actin filament bundling. Formation of the IPP complex is dependent on protein kinase C and precedes integrin-mediated cell adhesion and spreading. ILK also interacts with LIMS2/PINCH2 and with PARVB and PARVG which may substitute for LIMS1 and PARVA in the IPP complex; PARVA and PARVB compete for the same binding site. Interaction with PARVG promotes the establishment of cell polarity required for leukocyte migration. Interacts with the cytoplasmic domain of integrin ITGB1 and may also interact with integrins ITGB2, ITGB3 and/or ITGB5. Interacts probably also with TGFB1I1. Interacts (via ANK repeats) with EPHA1 (via SAM domain); stimulated by EFNA1 but independent of the kinase activity of EPHA1. Interacts with FERMT2. Interacts with LIMD2; leading to activate the protein kinase activity. Interacts with PXN/PAXILLIN (via LD motif 4). Interacts with CCDC25 (via cytoplasmic region); initiating the ILK-PARVB cascade to induce cytoskeleton rearrangement and directional migration of cells. Interacts with IQGAP1; the interaction is required for localization of IQGAP1 to the cell cortex. In terms of processing, phosphorylation by PAK1 modulates ILK subcellular location by promoting its nuclear export. As to expression, highly expressed in lung, heart, kidney, liver, brain, spleen and skeletal muscle. Weakly expressed in testis.

It localises to the cell junction. The protein localises to the focal adhesion. It is found in the cell membrane. The protein resides in the cytoplasm. Its subcellular location is the myofibril. It localises to the sarcomere. The protein localises to the cell projection. It is found in the lamellipodium. The protein resides in the nucleus. Its subcellular location is the cytoskeleton. It localises to the microtubule organizing center. The protein localises to the centrosome. It is found in the cell cortex. Its function is as follows. Scaffold protein which mediates protein-protein interactions during a range of cellular events including focal adhesion assembly, cell adhesion and cell migration. Regulates integrin-mediated signal transduction by contributing to inside-out integrin activation. Recruits PARVA and LIMS1/PITCH to form the heterotrimeric IPP (ILK-PINCH-PARVIN) complex which binds to F-actin via the C-terminal tail of LIMS1 and the N-terminal region of PARVA, promoting F-actin filament bundling, a process required to generate force for actin cytoskeleton reorganization and subsequent dynamic cell adhesion events such as cell spreading and migration. Binding to PARVA promotes effective assembly of ILK into focal adhesions while PARVA-bound ILK can simultaneously engage integrin-beta cytoplasmic tails to mediate cell adhesion. Plays a role with PARVG in promoting the cell adhesion and spreading of leukocytes. Acts as an upstream effector of both AKT1/PKB and GSK3. Mediates trafficking of caveolae to the cell surface in an ITGB1-dependent manner by promoting the recruitment of IQGAP1 to the cell cortex which cooperates with its effector DIAPH1 to locally stabilize microtubules and allow stable insertion of caveolae into the plasma membrane. Required for the maintenance of mitotic spindle integrity by promoting phosphorylation of TACC3 by AURKA. Associates with chromatin and may act as a negative regulator of transcription when located in the nucleus. This chain is Scaffold protein ILK, found in Mus musculus (Mouse).